The chain runs to 220 residues: Thiopurine S-methyltransferase (220 aa).

Residues Trp10, Leu45, Glu66, and Arg123 each contribute to the S-adenosyl-L-methionine site.

Belongs to the class I-like SAM-binding methyltransferase superfamily. TPMT family.

Its subcellular location is the cytoplasm. The catalysed reaction is S-adenosyl-L-methionine + a thiopurine = S-adenosyl-L-homocysteine + a thiopurine S-methylether.. In Nitrosospira multiformis (strain ATCC 25196 / NCIMB 11849 / C 71), this protein is Thiopurine S-methyltransferase.